The primary structure comprises 250 residues: Uridylate kinase (250 aa).

Residue 19 to 22 (KLSG) participates in ATP binding. Glycine 61 is a UMP binding site. 2 residues coordinate ATP: glycine 62 and arginine 66. UMP-binding positions include aspartate 81 and 142–149 (TGNPFFTT). Residues threonine 169, glutamine 170, tyrosine 175, and aspartate 178 each contribute to the ATP site.

This sequence belongs to the UMP kinase family. In terms of assembly, homohexamer.

The protein localises to the cytoplasm. The catalysed reaction is UMP + ATP = UDP + ADP. Its pathway is pyrimidine metabolism; CTP biosynthesis via de novo pathway; UDP from UMP (UMPK route): step 1/1. Its activity is regulated as follows. Inhibited by UTP. Functionally, catalyzes the reversible phosphorylation of UMP to UDP. The polypeptide is Uridylate kinase (Rhodospirillum rubrum (strain ATCC 11170 / ATH 1.1.1 / DSM 467 / LMG 4362 / NCIMB 8255 / S1)).